Reading from the N-terminus, the 301-residue chain is uncharacterized protein (301 aa).

The protein belongs to the asfivirus E301R family. In terms of assembly, interacts with host IRF3.

In terms of biological role, plays a role in the inhibition of host innate immune system by acting as a negatively regulator of type I interferon production. Mechanistically, interacts with and prevents host IRF3 nuclear localization to inhibit its transcriptional activity. This is an uncharacterized protein from African swine fever virus (isolate Tick/South Africa/Pretoriuskop Pr4/1996) (ASFV).